A 372-amino-acid chain; its full sequence is tRNA-specific 2-thiouridylase MnmA (372 aa).

ATP is bound by residues 11–18 (GMSGGVDS) and Met37. The interval 97-99 (NPD) is interaction with target base in tRNA. The Nucleophile role is filled by Cys102. A disulfide bridge connects residues Cys102 and Cys199. ATP is bound at residue Gly126. Residues 149 to 151 (KDQ) are interaction with tRNA. Cys199 serves as the catalytic Cysteine persulfide intermediate. An interaction with tRNA region spans residues 309-310 (RY).

It belongs to the MnmA/TRMU family.

It is found in the cytoplasm. The catalysed reaction is S-sulfanyl-L-cysteinyl-[protein] + uridine(34) in tRNA + AH2 + ATP = 2-thiouridine(34) in tRNA + L-cysteinyl-[protein] + A + AMP + diphosphate + H(+). Functionally, catalyzes the 2-thiolation of uridine at the wobble position (U34) of tRNA, leading to the formation of s(2)U34. The protein is tRNA-specific 2-thiouridylase MnmA of Staphylococcus epidermidis (strain ATCC 35984 / DSM 28319 / BCRC 17069 / CCUG 31568 / BM 3577 / RP62A).